Here is a 314-residue protein sequence, read N- to C-terminus: Dihydroorotate dehydrogenase (fumarate) (314 aa).

Residues K46, 70 to 74, and N130 contribute to the substrate site; that span reads NSMGL. 46–47 contacts FMN; the sequence is KS. Residue N130 participates in FMN binding. Active-site nucleophile residues include S132 and C133. Positions 167 and 195 each coordinate FMN. Substrate is bound at residue 196–197; that stretch reads NS. Residues G224, 252–253, and 274–275 each bind FMN; these read GG and GT.

It belongs to the dihydroorotate dehydrogenase family. Type 1 subfamily. As to quaternary structure, homodimer. Requires FMN as cofactor.

The protein resides in the cytoplasm. The catalysed reaction is (S)-dihydroorotate + fumarate = orotate + succinate. Its pathway is pyrimidine metabolism; UMP biosynthesis via de novo pathway. Catalyzes the conversion of dihydroorotate to orotate with fumarate as the electron acceptor. The polypeptide is Dihydroorotate dehydrogenase (fumarate) (URA1) (Saccharomyces bayanus (Yeast)).